A 149-amino-acid chain; its full sequence is Large-conductance mechanosensitive channel (149 aa).

The next 3 helical transmembrane spans lie at 10–30, 41–61, and 87–107; these read FALK…GAFA, IMPI…MFLI, and GSFI…FMMV.

It belongs to the MscL family. As to quaternary structure, homopentamer.

Its subcellular location is the cell inner membrane. In terms of biological role, channel that opens in response to stretch forces in the membrane lipid bilayer. May participate in the regulation of osmotic pressure changes within the cell. The protein is Large-conductance mechanosensitive channel of Psychrobacter cryohalolentis (strain ATCC BAA-1226 / DSM 17306 / VKM B-2378 / K5).